The sequence spans 509 residues: Maturase K (509 aa).

Belongs to the intron maturase 2 family. MatK subfamily.

The protein resides in the plastid. It localises to the chloroplast. Usually encoded in the trnK tRNA gene intron. Probably assists in splicing its own and other chloroplast group II introns. This chain is Maturase K, found in Nicotiana glauca (Glaucous tobacco).